The primary structure comprises 32 residues: Kappa-conotoxin SrXIA (32 aa).

4 disulfides stabilise this stretch: Cys1–Cys15, Cys8–Cys20, Cys14–Cys24, and Cys19–Cys28. Glu9 and Glu10 each carry 4-carboxyglutamate. Pro32 is subject to Proline amide.

The protein belongs to the conotoxin I2 superfamily. In terms of tissue distribution, expressed by the venom duct.

Its subcellular location is the secreted. In terms of biological role, kappa-conotoxins bind and inhibit voltage-gated potassium channels. This toxin inhibits Kv1.2/KCNA2 and Kv1.6/KCNA6. Produces stiffening of body, limbs and tail when injected intracranially into mice. In Conus spurius (Alphabet cone), this protein is Kappa-conotoxin SrXIA.